A 142-amino-acid polypeptide reads, in one-letter code: Large ribosomal subunit protein uL13 (142 aa).

This sequence belongs to the universal ribosomal protein uL13 family. Part of the 50S ribosomal subunit.

In terms of biological role, this protein is one of the early assembly proteins of the 50S ribosomal subunit, although it is not seen to bind rRNA by itself. It is important during the early stages of 50S assembly. The chain is Large ribosomal subunit protein uL13 from Cellvibrio japonicus (strain Ueda107) (Pseudomonas fluorescens subsp. cellulosa).